The primary structure comprises 1917 residues: Diacylglycerol kinase eta (1917 aa).

Basic and acidic residues predominate over residues Met1–His10. The disordered stretch occupies residues Met1 to Ser37. Positions Arg23–Ser37 are enriched in low complexity. The region spanning Ala82–Ala175 is the PH domain. 2 Phorbol-ester/DAG-type zinc fingers span residues His195–Cys245 and Pro268–Cys319. Positions Gly350–Lys486 constitute a DAGKc domain. Disordered regions lie at residues Thr1015–Ile1053, Leu1114–Glu1149, and Lys1380–Asn1399. The span at Pro1128–Thr1145 shows a compositional bias: polar residues. The region spanning Trp1854–Asn1917 is the SAM domain.

It belongs to the eukaryotic diacylglycerol kinase family.

The protein localises to the cytoplasm. The enzyme catalyses a 1,2-diacyl-sn-glycerol + ATP = a 1,2-diacyl-sn-glycero-3-phosphate + ADP + H(+). Functionally, phosphorylates diacylglycerol (DAG) to generate phosphatidic acid (PA). The chain is Diacylglycerol kinase eta from Drosophila yakuba (Fruit fly).